A 187-amino-acid chain; its full sequence is Coiled-coil domain-containing protein 201 (187 aa).

Disordered regions lie at residues 1-79 (MEPG…PPAT) and 92-159 (KESS…RAAA). Positions 111–131 (LTQRQRQRQQQQQQQESLRAK) form a coiled coil. Residues 147 to 157 (GRKRRDPKKRA) are compositionally biased toward basic residues.

The chain is Coiled-coil domain-containing protein 201 from Homo sapiens (Human).